Here is a 359-residue protein sequence, read N- to C-terminus: 3-dehydroquinate synthase (359 aa).

Residues 69 to 74 (DGEAHK), 103 to 107 (GVIGD), 127 to 128 (TT), K140, K149, and 167 to 170 (TLDT) contribute to the NAD(+) site. Residues E182, H245, and H262 each contribute to the Zn(2+) site.

It belongs to the sugar phosphate cyclases superfamily. Dehydroquinate synthase family. Co(2+) serves as cofactor. The cofactor is Zn(2+). NAD(+) is required as a cofactor.

It is found in the cytoplasm. The enzyme catalyses 7-phospho-2-dehydro-3-deoxy-D-arabino-heptonate = 3-dehydroquinate + phosphate. Its pathway is metabolic intermediate biosynthesis; chorismate biosynthesis; chorismate from D-erythrose 4-phosphate and phosphoenolpyruvate: step 2/7. Its function is as follows. Catalyzes the conversion of 3-deoxy-D-arabino-heptulosonate 7-phosphate (DAHP) to dehydroquinate (DHQ). The chain is 3-dehydroquinate synthase from Methylococcus capsulatus (strain ATCC 33009 / NCIMB 11132 / Bath).